Here is a 357-residue protein sequence, read N- to C-terminus: Chorismate synthase (357 aa).

Arg47 lines the NADP(+) pocket. FMN contacts are provided by residues 123–125, Gly281, 296–300, and Arg324; these read RAS and KPTSS.

It belongs to the chorismate synthase family. As to quaternary structure, homotetramer. FMNH2 is required as a cofactor.

The enzyme catalyses 5-O-(1-carboxyvinyl)-3-phosphoshikimate = chorismate + phosphate. It functions in the pathway metabolic intermediate biosynthesis; chorismate biosynthesis; chorismate from D-erythrose 4-phosphate and phosphoenolpyruvate: step 7/7. In terms of biological role, catalyzes the anti-1,4-elimination of the C-3 phosphate and the C-6 proR hydrogen from 5-enolpyruvylshikimate-3-phosphate (EPSP) to yield chorismate, which is the branch point compound that serves as the starting substrate for the three terminal pathways of aromatic amino acid biosynthesis. This reaction introduces a second double bond into the aromatic ring system. In Chlamydia trachomatis serovar A (strain ATCC VR-571B / DSM 19440 / HAR-13), this protein is Chorismate synthase.